Reading from the N-terminus, the 466-residue chain is ATP synthase subunit beta (466 aa).

Position 152–159 (152–159 (GGAGVGKT)) interacts with ATP.

The protein belongs to the ATPase alpha/beta chains family. As to quaternary structure, F-type ATPases have 2 components, CF(1) - the catalytic core - and CF(0) - the membrane proton channel. CF(1) has five subunits: alpha(3), beta(3), gamma(1), delta(1), epsilon(1). CF(0) has three main subunits: a(1), b(2) and c(9-12). The alpha and beta chains form an alternating ring which encloses part of the gamma chain. CF(1) is attached to CF(0) by a central stalk formed by the gamma and epsilon chains, while a peripheral stalk is formed by the delta and b chains.

It localises to the cell inner membrane. It carries out the reaction ATP + H2O + 4 H(+)(in) = ADP + phosphate + 5 H(+)(out). In terms of biological role, produces ATP from ADP in the presence of a proton gradient across the membrane. The catalytic sites are hosted primarily by the beta subunits. This Sulfurovum sp. (strain NBC37-1) protein is ATP synthase subunit beta.